The chain runs to 428 residues: MTKLRSSLYFWVLVAIALGVILGIVAPSTGAAMKPLGDGFIKLIKMVIAPIIFCTVVLGIAGTGDLKKVGRTGGLALLYFEVVSTVSLILGLLIVNIVRPGAGMNIDVRTLDAAAVSAYAGKGKMQSTSEFLINVIPNTFVDAFARGEILQVLLLAVLFGIALQRLGAHRNEVFQFIEKFSEIMFELVRMIMKVAPIGAFGAMAFTIGAYGIGSLFSLAKLMATFYLTCLCFIFLVLGAIARYHGFSIWRFLRYIREELLIVLGTSSSEAALPRMMAKMESLGAGRSTVGLVIPAGYSFNLDGTSIYLTMAAVFVAQATNSAMTLGEQFTLLAVLLLMSKGAAGVTGSGFIVLAATLSAIGKVPVGGLALILGIDRFMSEARALTNVIGNGVASIVVAKWTGDLDETMLTTRLKSGPPTPAEEPAIMS.

A run of 9 helical transmembrane segments spans residues 7–27 (SLYF…IVAP), 40–60 (FIKL…VLGI), 75–95 (LALL…LLIV), 143–163 (AFAR…GIAL), 196–216 (PIGA…GSLF), 221–241 (LMAT…GAIA), 306–326 (IYLT…MTLG), 329–349 (FTLL…TGSG), and 351–371 (IVLA…LALI).

This sequence belongs to the dicarboxylate/amino acid:cation symporter (DAACS) (TC 2.A.23) family.

The protein resides in the cell inner membrane. Responsible for the transport of dicarboxylates such as succinate, fumarate, and malate from the periplasm across the membrane. The polypeptide is C4-dicarboxylate transport protein (Solibacter usitatus (strain Ellin6076)).